Reading from the N-terminus, the 509-residue chain is Ceramide glucosyltransferase (509 aa).

Topologically, residues 1–42 (MIMQLGLTSLAFLALKCDAYNIAPKIDTPNVEPFAPSGGLKL) are lumenal. Residues 43–63 (LAIVAIIWYVVVLLVAYYGFF) traverse the membrane as a helical segment. The Cytoplasmic segment spans residues 64-384 (EIMQKFSKRK…EATLLEPTTE (321 aa)). A short sequence motif (D1) is located at residue D123. Position 179 (D179) is a short sequence motif, D2. D321 is a short sequence motif (D3). D321 serves as the catalytic Proton acceptor. The short motif at 361–365 (RRIRW) is the (Q/R)XXRW element. The chain crosses the membrane as a helical span at residues 385–405 (CLLCGTFGTFAISTLFLQSYF). At 406 to 408 (NWK) the chain is on the lumenal side. The chain crosses the membrane as a helical span at residues 409–429 (FFIFHLLVWMVTDYTQFHILL). The Cytoplasmic portion of the chain corresponds to 430-466 (TNASQDTATCNVPYFAEPNFNAYGSPFESSNLRTFHR). A helical membrane pass occupies residues 467-487 (WVLYWLLREVLALPIWISAML). The Lumenal segment spans residues 488–509 (GTRIIWRNRPFRINVDLSAEEL).

The protein belongs to the glycosyltransferase 2 family.

The protein localises to the golgi apparatus membrane. The enzyme catalyses an N-acylsphing-4-enine + UDP-alpha-D-glucose = a beta-D-glucosyl-(1&lt;-&gt;1')-N-acylsphing-4-enine + UDP + H(+). It participates in lipid metabolism; sphingolipid metabolism. In terms of biological role, catalyzes the final step in the biosynthesis of the membrane lipid glucosylceramide (GluCer), the transfer of glucose to ceramide. Glucosylceramides play important roles in growth, differentiation and pathogenicity. The polypeptide is Ceramide glucosyltransferase (Komagataella phaffii (strain GS115 / ATCC 20864) (Yeast)).